The primary structure comprises 111 residues: Dormancy-associated protein 1 (111 aa).

The tract at residues 30–60 is disordered; it reads KDDGASNQLMRSTSIPTTPTTPVTPTTPSSA. Low complexity predominate over residues 41–59; that stretch reads STSIPTTPTTPVTPTTPSS.

It belongs to the DRM1/ARP family. In terms of tissue distribution, expressed in axilary buds and in non-growing stems and roots. Detected in sepals, stamens and carpels, but barely detected in petals or leaflets.

This is Dormancy-associated protein 1 from Pisum sativum (Garden pea).